Consider the following 784-residue polypeptide: Ent-kaurene synthase 1, chloroplastic (784 aa).

The transit peptide at 1–28 (MNLSLCIASPLLTKSSRPTALSAIHTAS) directs the protein to the chloroplast. Mg(2+) contacts are provided by D528, D532, N672, and E680. Residues 528–532 (DDFFD) carry the DDXXD motif motif.

Belongs to the terpene synthase family. Requires Mg(2+) as cofactor. As to expression, accumulates in leaves.

It is found in the plastid. Its subcellular location is the chloroplast. The catalysed reaction is ent-copalyl diphosphate = ent-kaur-16-ene + diphosphate. It participates in secondary metabolite biosynthesis; terpenoid biosynthesis. Its pathway is plant hormone biosynthesis; gibberellin biosynthesis. Functionally, involved in the biosynthesis of ent-kaurene diterpenoids natural products such as oridonin, miltiradiene, eriocalyxin B and nezukol, known to exhibit antitumor, anti-inflammatory and antibacterial activities, and in the production of gibberellins phytohormones. Catalyzes the conversion of ent-copalyl diphosphate (ent-CPP) to ent-kaurene. In Stevia rebaudiana (Stevia), this protein is Ent-kaurene synthase 1, chloroplastic.